Reading from the N-terminus, the 143-residue chain is Transcriptional regulator MraZ (143 aa).

SpoVT-AbrB domains lie at 5–47 (EFRH…PMNE) and 76–119 (ASEC…SQEK).

It belongs to the MraZ family. In terms of assembly, forms oligomers.

It localises to the cytoplasm. The protein resides in the nucleoid. The protein is Transcriptional regulator MraZ of Natranaerobius thermophilus (strain ATCC BAA-1301 / DSM 18059 / JW/NM-WN-LF).